The chain runs to 714 residues: Macrophage-expressed gene 1 protein (714 aa).

A signal peptide spans 1-19; it reads MNSFMAIALIWMMIACAEA. The MACPF domain maps to 30–345; that stretch reads GFQTCKDTLK…TAVRHYYTFN (316 aa). The cysteines at positions 34 and 70 are disulfide-linked. The next 2 beta stranded transmembrane spans lie at 113–120 and 127–132; these read FSINTELS and GKFSTE. An N-linked (GlcNAc...) asparagine glycan is attached at Asn185. The next 2 beta stranded transmembrane spans lie at 235-244 and 248-256; these read TVTASAGIAF and VNFKVETDH. N-linked (GlcNAc...) asparagine glycosylation occurs at Asn269. Cys350 and Cys369 are joined by a disulfide. A glycan (N-linked (GlcNAc...) asparagine) is linked at Asn375. Cystine bridges form between Cys385–Cys394, Cys432–Cys446, Cys436–Cys442, Cys531–Cys569, and Cys554–Cys574. The segment at 410-653 is P2; sequence PSGYTPVHLL…GDGNGMSGGE (244 aa). Residues 654–674 form a helical membrane-spanning segment; sequence AAGVTLGVIIALGIVITLAIY. The tract at residues 690-714 is disordered; sequence EQESLVGSFATDASPPNGEQDPCPA.

This sequence belongs to the MPEG1 family. In terms of assembly, homooligomer; predominantly forms a homooligomeric arc-shaped pore complex instead of complete rings of 16 subunits. In terms of processing, proteolytically processed in two steps to generate the Macrophage-expressed gene 1 protein, processed form: cleaved by trypsin in proximity of the helical transmembrane domain releases the ectodomain into the lysosomal lumen to orient the pore-forming domain toward the endogenous membranes, and processed by the asparagine endopeptidase (LGMN). Proteolytic processing in antigen-containing vesicles is pH-dependent. Post-translationally, monoubiquitinated in response to bacterial infection; ubiquitination is required for vesicular localization and antibacterial activity and can be blocked by bacterial cell cycle inhibiting factor (cif).

It is found in the cytoplasmic vesicle membrane. The protein resides in the cytoplasmic vesicle. The protein localises to the phagosome membrane. Forms arc- and ring-shaped pre-pores on top of the membrane at neutral to slightly acidic pH conditions and converts to pores upon acidification. Undergoes transition from the pre-pore to the pore in a processive clockwise hand-over-hand process. In the pore state, 2 alpha-helical regions refold into transmembrane hairpins (TMH1 and TMH2) in each protomer that form in the ensemble complex giant beta-barrel transmembrane pores. Functionally, pore-forming protein involved in both innate and adaptive immunity. Plays a central role in antigen cross-presentation in dendritic cells by forming a pore in antigen-containing compartments, thereby promoting delivery of antigens for cross-presentation. Also involved in innate immune response following bacterial infection; shows antibacterial activity against a wide spectrum of Gram-positive, Gram-negative and acid-fast bacteria. Reduces the viability of the intracytosolic pathogen L.monocytogenes by inhibiting acidification of the phagocytic vacuole of host cells which restricts bacterial translocation from the vacuole to the cytosol. Required for the antibacterial activity of reactive oxygen species and nitric oxide. Its function is as follows. Pore-forming protein that plays a central role in antigen cross-presentation in dendritic cells by mediating delivery of antigens for cross-presentation. Dendritic cells bridge innate and adaptive immunity by capturing exogenous antigens on MHC class-I molecules and presenting them to naive CD8(+) T-cells. Acts by forming a pore in antigen-containing compartments, promoting the release of antigens into the cytosol, enabling generation of MHCI:peptide complexes and T-cell priming. The polypeptide is Macrophage-expressed gene 1 protein (Mpeg1) (Rattus norvegicus (Rat)).